A 992-amino-acid chain; its full sequence is Sorting nexin-19 (992 aa).

The PXA domain maps to 95–272 (ERQLEREINR…VLVGIFSKAR (178 aa)). The tract at residues 410-442 (ALEPKDGEASEGAEAEEGPGTETETGLPVSTLN) is disordered. The span at 418–428 (ASEGAEAEEGP) shows a compositional bias: acidic residues. A PX domain is found at 533-663 (LRITGTITAR…EFLALNTDAR (131 aa)). A 1,2-diacyl-sn-glycero-3-phospho-(1D-myo-inositol-3-phosphate)-binding residues include Arg-582 and Arg-629. Disordered regions lie at residues 692-726 (FPRSEPQSPTEELSEAETESKPQTEGKKASKSRLR), 778-797 (QPTKAPEKDPEQPPKGRVDS), and 973-992 (AATTSASDTPGNSKRMGVSS). Basic and acidic residues-rich tracts occupy residues 709 to 719 (TESKPQTEGKK) and 782 to 795 (APEKDPEQPPKGRV). Polar residues predominate over residues 980 to 992 (DTPGNSKRMGVSS).

This sequence belongs to the sorting nexin family. As to quaternary structure, interacts with PTPRN.

The protein resides in the early endosome membrane. The protein localises to the cytoplasmic vesicle membrane. Its function is as follows. Plays a role in intracellular vesicle trafficking and exocytosis. May play a role in maintaining insulin-containing dense core vesicles in pancreatic beta-cells and in preventing their degradation. May play a role in insulin secretion. Interacts with membranes containing phosphatidylinositol 3-phosphate (PtdIns(3P)). The polypeptide is Sorting nexin-19 (SNX19) (Homo sapiens (Human)).